We begin with the raw amino-acid sequence, 189 residues long: Protein Rex (189 aa).

Residues 1 to 16 (MPKTRRRPRRSQRKRP) show a composition bias toward basic residues. The segment at 1-28 (MPKTRRRPRRSQRKRPPTPWPTSQGLDR) is disordered. The Nuclear localization signal, and RNA-binding (RxRE) signature appears at 2–18 (PKTRRRPRRSQRKRPPT). A homomultimerization region spans residues 56–70 (RPVYIVTPYWPPVQS). The residue at position 70 (Ser70) is a Phosphoserine; by host. The short motif at 82–93 (LSAQLYSSLSLD) is the Nuclear export signal element. The segment covering 84 to 94 (AQLYSSLSLDS) has biased composition (low complexity). Residues 84–189 (AQLYSSLSLD…PPSPGPSCPT (106 aa)) form a disordered region. The span at 111–125 (RRPPIQPPTFHPPSS) shows a compositional bias: pro residues. The interval 123–131 (PSSRPCANT) is homomultimerization. Residues 127 to 164 (PCANTPPSETDTWNPPLGSTSQPCLFQTPASGPKTCTP) show a composition bias toward polar residues. Thr174 carries the post-translational modification Phosphothreonine; by host. A Phosphoserine; by host modification is found at Ser177. Residues 178–189 (FPPPSPGPSCPT) are compositionally biased toward pro residues.

The protein belongs to the deltaretrovirus Rex protein family. Homomultimer. Multimeric assembly is essential for activity and involves XPO1. Binds to human XPO1 and KPNB1. Interacts (via N-terminal nuclear localization signal) with human NPM1. In terms of processing, phosphorylated.

The protein resides in the host nucleus. Its subcellular location is the host nucleolus. It is found in the host cytoplasm. In terms of biological role, rex escorts unspliced gag-pro-pol and singly spliced env mRNAs out of the nucleus of infected cells. These mRNAs carry a recognition sequence called Rex responsive element (RxRE or XRE) located at the 3' region of the long terminal repeat (LTR). This function is essential since most HTLV proteins are translated from unspliced or partially spliced pre-mRNAs that cannot exit the nucleus by the pathway used by fully processed cellular mRNAs. Rex itself is translated from a fully spliced mRNA that probably readily exits the nucleus. Rex's nuclear localization signal (NLS) binds directly to KPNB1/importin beta-1 without previous binding to KPNA1/importin alpha-1. KPNB1 binds to the GDP bound form of RAN (Ran-GDP) and targets Rex to the nucleus. In the nucleus, the conversion from Ran-GDP to Ran-GTP dissociates Rex from KPNB1 and allows Rex's binding to the RRE in viral pre-mRNAs. Rex multimerizes on the RRE via cooperative assembly. This multimerization is critical for its full biological activity, since it may shield the viral RNA from being spliced or down-regulated, and probably exposes Rex's nuclear export signal (NES) to the surface. Rex can then form a complex with XPO1/CRM1, RANBP3 and Ran-GTP, leading to nuclear export of the complex. Conversion from Ran-GTP to Ran-GDP mediates dissociation of the Rex/RRE/XPO1/RANBP3/RAN complex, so that Rex can return to the nucleus for a subsequent round of export. The protein is Protein Rex of Homo sapiens (Human).